The sequence spans 157 residues: Holo-[acyl-carrier-protein] synthase (157 aa).

Mg(2+)-binding residues include D8 and E59.

This sequence belongs to the P-Pant transferase superfamily. AcpS family. Mg(2+) is required as a cofactor.

The protein localises to the cytoplasm. It carries out the reaction apo-[ACP] + CoA = holo-[ACP] + adenosine 3',5'-bisphosphate + H(+). Functionally, transfers the 4'-phosphopantetheine moiety from coenzyme A to a Ser of acyl-carrier-protein. The polypeptide is Holo-[acyl-carrier-protein] synthase (Gluconobacter oxydans (strain 621H) (Gluconobacter suboxydans)).